Consider the following 139-residue polypeptide: Acidic phospholipase A2 H1E6 (139 aa).

Positions 1–16 (MRTLWILAVLQVGVEG) are cleaved as a signal peptide. Cystine bridges form between Cys42–Cys132, Cys44–Cys60, Cys59–Cys111, Cys65–Cys139, Cys66–Cys104, Cys73–Cys97, and Cys91–Cys102. Ca(2+) is bound by residues Tyr43, Gly45, and Gly47. The active site involves His63. A Ca(2+)-binding site is contributed by Asp64. Residue Asp105 is part of the active site.

Homodimer. The cofactor is Ca(2+). As to expression, expressed by the venom gland.

It is found in the secreted. It catalyses the reaction a 1,2-diacyl-sn-glycero-3-phosphocholine + H2O = a 1-acyl-sn-glycero-3-phosphocholine + a fatty acid + H(+). Its function is as follows. Snake venom phospholipase A2 (PLA2) that inhibits ADP-induced platelet aggregation. PLA2 catalyzes the calcium-dependent hydrolysis of the 2-acyl groups in 3-sn-phosphoglycerides. In Calloselasma rhodostoma (Malayan pit viper), this protein is Acidic phospholipase A2 H1E6.